We begin with the raw amino-acid sequence, 88 residues long: Small ribosomal subunit protein uS17 (88 aa).

This sequence belongs to the universal ribosomal protein uS17 family. In terms of assembly, part of the 30S ribosomal subunit.

In terms of biological role, one of the primary rRNA binding proteins, it binds specifically to the 5'-end of 16S ribosomal RNA. The sequence is that of Small ribosomal subunit protein uS17 from Nitratidesulfovibrio vulgaris (strain DSM 19637 / Miyazaki F) (Desulfovibrio vulgaris).